The chain runs to 329 residues: UPF0158 protein CT_429 (329 aa).

The tract at residues 292–329 is disordered; it reads GYDSDGETGDFFDEEYDDEEEEIKPKKTTKRGRKKSRS. Residues 295–313 are compositionally biased toward acidic residues; the sequence is SDGETGDFFDEEYDDEEEE. Positions 317–329 are enriched in basic residues; the sequence is KKTTKRGRKKSRS.

This sequence belongs to the UPF0158 family.

This is UPF0158 protein CT_429 from Chlamydia trachomatis serovar D (strain ATCC VR-885 / DSM 19411 / UW-3/Cx).